The following is a 548-amino-acid chain: MPTELTDYDPSMGNKFIFVTGGVMSGLGKGITAASTGRLLANAGFDVTAVKIDPYLNVDAGTMNPYQHGEVYVLKDGGEVDLDLGNYERFLDIDMTFDHNITTGKTYRHVIEKERAGDYLGKTVQIIPHVTDDIKRRIREAAEGHDVCIIEVGGTVGDIEGMPYLEALRQFAHEEDDDDILFTHVTLVPYSKNGEQKTKPTQHSVKELRSIGLQPDILVGRCEDKLDIEAKEKIALFCDVPMDAVFSNPDVEDIYHVPLMVEEEGLDQYVMEQLGLDERALPPEERANEWRDIVTQETTDEVDIALVGKYAMEDAYLSIYESLKHAGFETNTDVNVLWVDADEMDDAHADRLSRADGIIVPGGFGSRGTEGKIEAITYARENDVPFLGLCLGFQMAVVEYARNVCGLDGAHSAEIDDETDHPVIDILPEQYEVEDMGGTMRLGAHETDIEAGTLAHELYADEQCTERHRHRYEVNPEYIETLESAGLVFSGQDQNRMEILELPDHPFFFGTQFHPEFRSRPGRASPPFVGLVETILETTDTDTEEVTA.

Residues 1-276 (MPTELTDYDP…DQYVMEQLGL (276 aa)) are amidoligase domain. Residue Ser-25 participates in CTP binding. Residue Ser-25 participates in UTP binding. 26–31 (GLGKGI) lines the ATP pocket. Tyr-66 lines the L-glutamine pocket. Residue Asp-83 coordinates ATP. The Mg(2+) site is built by Asp-83 and Glu-151. CTP-binding positions include 158-160 (DIE), 197-202 (KTKPTQ), and Lys-233. Residues 197 to 202 (KTKPTQ) and Lys-233 contribute to the UTP site. The Glutamine amidotransferase type-1 domain maps to 303 to 541 (DIALVGKYAM…VETILETTDT (239 aa)). Residue Gly-363 coordinates L-glutamine. The Nucleophile; for glutamine hydrolysis role is filled by Cys-390. L-glutamine is bound by residues 391–394 (LGFQ), Glu-414, and Arg-471. Active-site residues include His-514 and Glu-516.

This sequence belongs to the CTP synthase family. Homotetramer.

It catalyses the reaction UTP + L-glutamine + ATP + H2O = CTP + L-glutamate + ADP + phosphate + 2 H(+). It carries out the reaction L-glutamine + H2O = L-glutamate + NH4(+). The catalysed reaction is UTP + NH4(+) + ATP = CTP + ADP + phosphate + 2 H(+). Its pathway is pyrimidine metabolism; CTP biosynthesis via de novo pathway; CTP from UDP: step 2/2. With respect to regulation, allosterically activated by GTP, when glutamine is the substrate; GTP has no effect on the reaction when ammonia is the substrate. The allosteric effector GTP functions by stabilizing the protein conformation that binds the tetrahedral intermediate(s) formed during glutamine hydrolysis. Inhibited by the product CTP, via allosteric rather than competitive inhibition. Functionally, catalyzes the ATP-dependent amination of UTP to CTP with either L-glutamine or ammonia as the source of nitrogen. Regulates intracellular CTP levels through interactions with the four ribonucleotide triphosphates. This is CTP synthase from Natronomonas pharaonis (strain ATCC 35678 / DSM 2160 / CIP 103997 / JCM 8858 / NBRC 14720 / NCIMB 2260 / Gabara) (Halobacterium pharaonis).